Consider the following 277-residue polypeptide: MEAAAAIAPQRAWGKGRLVAKTGGARTRIAGLYQEGCAKIRLPRTFDASMEAVLINSSGGVTGGDRLAWEFEAGEGTNLTLTTQACEKVYKASVDTAVVATRISVAARGHVDWLPQESILFDRSALSRSLEVDLAPDASFLALEAVLIGRKAMGETVRSGLFRDHWRIRSGGALVHAENLALAGDIAALGSRRAVLDGAVAFATLVYVAPDCEALLPRLRTSLAEHALSGVSHFAVNGRDKIVARVVAADGFALRKILIPLISHLRKGASVPRVWTL.

It belongs to the UreD family. In terms of assembly, ureD, UreF and UreG form a complex that acts as a GTP-hydrolysis-dependent molecular chaperone, activating the urease apoprotein by helping to assemble the nickel containing metallocenter of UreC. The UreE protein probably delivers the nickel.

It localises to the cytoplasm. In terms of biological role, required for maturation of urease via the functional incorporation of the urease nickel metallocenter. The sequence is that of Urease accessory protein UreD from Sinorhizobium medicae (strain WSM419) (Ensifer medicae).